The chain runs to 140 residues: Ribosome-binding factor A (140 aa).

Positions 121–140 are disordered; the sequence is KAAEHGREDEELDDTEQDDK. Positions 129 to 140 are enriched in acidic residues; that stretch reads DEELDDTEQDDK.

The protein belongs to the RbfA family. In terms of assembly, monomer. Binds 30S ribosomal subunits, but not 50S ribosomal subunits or 70S ribosomes.

It localises to the cytoplasm. In terms of biological role, one of several proteins that assist in the late maturation steps of the functional core of the 30S ribosomal subunit. Associates with free 30S ribosomal subunits (but not with 30S subunits that are part of 70S ribosomes or polysomes). Required for efficient processing of 16S rRNA. May interact with the 5'-terminal helix region of 16S rRNA. The sequence is that of Ribosome-binding factor A from Shewanella loihica (strain ATCC BAA-1088 / PV-4).